Here is a 350-residue protein sequence, read N- to C-terminus: MQASQFSAQVLDWYDKYGRKTLPWQIDKTPYKVWLSEVMLQQTQVATVIPYFERFMARFPTVTDLANAPLDEVLHLWTGLGYYARARNLHKAAQQVATLHGGKFPETFEEVAALPGVGRSTAGAILSLSLGKHFPILDGNVKRVLARCYAVSGWPGKKEVENKLWSLSEQVTPAVGVERFNQAMMDLGAMICTRSKPKCSLCPLQNGCIAAANNSWALYPGKKPKQTLPERTGYFLLLQHEDEVLLAQRPPSGLWGGLYCFPQFADEESLRQWLAQRQIAADNLTQLTAFRHTFSHFHLDIVPMWLPVSSFTGCMDEGNALWYNLAQPPSVGLAAPVERLLQQLRTGAPV.

Glu-37 serves as the catalytic Proton donor/acceptor. Cys-192, Cys-199, Cys-202, and Cys-208 together coordinate [4Fe-4S] cluster.

This sequence belongs to the Nth/MutY family. In terms of assembly, monomer. [4Fe-4S] cluster serves as cofactor.

The enzyme catalyses Hydrolyzes free adenine bases from 7,8-dihydro-8-oxoguanine:adenine mismatched double-stranded DNA, leaving an apurinic site.. In terms of biological role, adenine glycosylase active on G-A mispairs. MutY also corrects error-prone DNA synthesis past GO lesions which are due to the oxidatively damaged form of guanine: 7,8-dihydro-8-oxoguanine (8-oxo-dGTP). This chain is Adenine DNA glycosylase (mutY), found in Escherichia coli (strain K12).